Here is a 273-residue protein sequence, read N- to C-terminus: Large ribosomal subunit protein uL2 (273 aa).

A disordered region spans residues 213-261 (WLGKRPQSRGVAMNPVDHPHGGGEGKSSGGRHPVTPWGVPTKGYKTRVN).

This sequence belongs to the universal ribosomal protein uL2 family. Part of the 50S ribosomal subunit. Forms a bridge to the 30S subunit in the 70S ribosome.

Functionally, one of the primary rRNA binding proteins. Required for association of the 30S and 50S subunits to form the 70S ribosome, for tRNA binding and peptide bond formation. It has been suggested to have peptidyltransferase activity; this is somewhat controversial. Makes several contacts with the 16S rRNA in the 70S ribosome. This chain is Large ribosomal subunit protein uL2, found in Syntrophotalea carbinolica (strain DSM 2380 / NBRC 103641 / GraBd1) (Pelobacter carbinolicus).